The following is a 176-amino-acid chain: NAD(P)H-quinone oxidoreductase subunit 6, chloroplastic (176 aa).

The next 5 membrane-spanning stretches (helical) occupy residues 10-30 (FLLV…VLLP), 32-52 (PIFS…LYIL), 61-81 (AQLL…VMFM), 92-112 (LWTV…FLLM), and 152-172 (FFLP…GAIS).

It belongs to the complex I subunit 6 family. NDH is composed of at least 16 different subunits, 5 of which are encoded in the nucleus.

It localises to the plastid. It is found in the chloroplast thylakoid membrane. The catalysed reaction is a plastoquinone + NADH + (n+1) H(+)(in) = a plastoquinol + NAD(+) + n H(+)(out). It catalyses the reaction a plastoquinone + NADPH + (n+1) H(+)(in) = a plastoquinol + NADP(+) + n H(+)(out). In terms of biological role, NDH shuttles electrons from NAD(P)H:plastoquinone, via FMN and iron-sulfur (Fe-S) centers, to quinones in the photosynthetic chain and possibly in a chloroplast respiratory chain. The immediate electron acceptor for the enzyme in this species is believed to be plastoquinone. Couples the redox reaction to proton translocation, and thus conserves the redox energy in a proton gradient. This Olimarabidopsis pumila (Dwarf rocket) protein is NAD(P)H-quinone oxidoreductase subunit 6, chloroplastic (ndhG).